The sequence spans 91 residues: Large ribosomal subunit protein bL27 (91 aa).

Positions 1 to 20 (MAHKKGVGSSKNGRDSNPKY) are disordered.

It belongs to the bacterial ribosomal protein bL27 family.

The chain is Large ribosomal subunit protein bL27 from Deinococcus geothermalis (strain DSM 11300 / CIP 105573 / AG-3a).